The primary structure comprises 594 residues: Capsid vertex component 1 (594 aa).

Disordered stretches follow at residues 52–77, 176–205, 443–468, and 575–594; these read GRST…DAVG, NKRD…NGSD, ARRQ…SGPP, and GRQE…FDDL. Residues 61 to 76 are compositionally biased toward acidic residues; it reads GDEDDAPASDDAEDAV.

It belongs to the herpesviridae CVC1 protein family. In terms of assembly, interacts (via C-terminus) with capsid vertex component 2/CVC2.

The protein resides in the virion. Its subcellular location is the host nucleus. Capsid vertex-specific component that plays a role during viral DNA encapsidation, assuring correct genome cleavage and presumably stabilizing capsids that contain full-length viral genomes. The polypeptide is Capsid vertex component 1 (Homo sapiens (Human)).